The following is a 373-amino-acid chain: MLRSVWNFLKRHKKKCIFLGTVLGGVYILGKYGQKKIREIQEREAAEYIAQARRQYHFESNQRTCNMTVLSMLPTLREALMQQLNSESLTALLKNRPSNKLEIWEDLKIISFTRSTVAVYSTCMLVVLLRVQLNIIGGYIYLDNAAVGKNGTTILAPPDVQQQYLSSIQHLLGDGLTELITVIKQAVQKVLGSVSLKHSLSLLDLEQKLKEIRNLVEQHKSSSWINKDGSKPLLCHYMMPDEETPLAVQACGLSPRDITTIKLLNETRDMLESPDFSTVLNTCLNRGFSRLLDNMAEFFRPTEQDLQHGNSMNSLSSVSLPLAKIIPIVNGQIHSVCSETPSHFVQDLLTMEQVKDFAANVYEAFSTPQQLEK.

The Cytoplasmic portion of the chain corresponds to 1-15 (MLRSVWNFLKRHKKK). The interval 1 to 45 (MLRSVWNFLKRHKKKCIFLGTVLGGVYILGKYGQKKIREIQEREA) is targeting to peroxisomes. Residues 16–36 (CIFLGTVLGGVYILGKYGQKK) form a helical membrane-spanning segment. Residues 37 to 116 (IREIQEREAA…LKIISFTRST (80 aa)) lie on the Peroxisomal side of the membrane. Residues 117 to 140 (VAVYSTCMLVVLLRVQLNIIGGYI) traverse the membrane as a helical segment. The segment at 120–136 (YSTCMLVVLLRVQLNII) is interaction with PEX19. The Cytoplasmic segment spans residues 141–373 (YLDNAAVGKN…AFSTPQQLEK (233 aa)).

Belongs to the peroxin-3 family. In terms of assembly, interacts with PEX19. In terms of tissue distribution, found in all examined tissues.

The protein resides in the peroxisome membrane. In terms of biological role, involved in peroxisome biosynthesis and integrity. Assembles membrane vesicles before the matrix proteins are translocated. As a docking factor for PEX19, is necessary for the import of peroxisomal membrane proteins in the peroxisomes. This is Peroxisomal biogenesis factor 3 (PEX3) from Homo sapiens (Human).